Reading from the N-terminus, the 1210-residue chain is AF4/FMR2 family member 1 (1210 aa).

Disordered stretches follow at residues 1 to 45, 73 to 314, 366 to 957, and 1098 to 1119; these read MAAQ…GEPY, TKSH…KPLP, SWPP…KPQV, and TGTP…SQSS. Basic and acidic residues-rich tracts occupy residues 9–35 and 78–87; these read NDDR…EAFP and HRLDASENRL. S199, S206, and S212 each carry phosphoserine. Residues 215–238 are compositionally biased toward polar residues; it reads HSNQQTLPRTQGSSKVHGSSNNSK. T220 is subject to Phosphothreonine. The span at 245-259 shows a compositional bias: basic and acidic residues; that stretch reads SPKDLAVKVHDKETP. Pro residues predominate over residues 267–279; the sequence is AQPPSQTFPPPSL. A compositionally biased stretch (polar residues) spans 394–419; it reads HVSSVTQNQKQYDTSSKTHSNSQQGT. A compositionally biased stretch (acidic residues) spans 423–439; it reads LEDDLQLSDSEDSDSEQ. A compositionally biased stretch (pro residues) spans 442-453; the sequence is EKPPSSSAPPSA. The span at 454-472 shows a compositional bias: low complexity; the sequence is PQSLPEPVASAHSSSAESE. Residues 473–497 are compositionally biased toward acidic residues; it reads STSDSDSSSDSESESSSSDSEENEP. Residues 536–546 show a composition bias toward basic and acidic residues; it reads EPPRRHPESKG. Positions 586-602 are enriched in polar residues; that stretch reads QKSPAQQEPPQRQTVGT. S588 is modified (phosphoserine). K681 is modified (N6-acetyllysine). Positions 688–699 are enriched in basic and acidic residues; sequence PAKDNVEDRTPE. T697 bears the Phosphothreonine mark. Positions 707 to 724 are enriched in polar residues; that stretch reads TESQGPPHSGSGSRTSGC. Residues 732-747 are compositionally biased toward basic and acidic residues; that stretch reads EDSRKDRLPLPLRDTK. S750 is subject to Phosphoserine. T755 is subject to Phosphothreonine. Positions 816–834 are enriched in basic and acidic residues; sequence GEAERDCDNKKIRLEKEIK. Residues 871–880 are compositionally biased toward low complexity; the sequence is SSSSQKPAKP. The span at 906–932 shows a compositional bias: basic and acidic residues; the sequence is NHKDSSIPKQRRVEGKGSRSSSEHKGS. The segment covering 1110–1119 has biased composition (low complexity); sequence PASSVGSQSS.

The protein belongs to the AF4 family. In terms of assembly, component of the super elongation complex (SEC), at least composed of EAF1, EAF2, CDK9, MLLT3/AF9, AFF (AFF1 or AFF4), the P-TEFb complex and ELL (ELL, ELL2 or ELL3).

It localises to the nucleus. This is AF4/FMR2 family member 1 (AFF1) from Homo sapiens (Human).